The chain runs to 159 residues: Major latex protein 146 (159 aa).

It belongs to the MLP family. As to expression, laticifer.

It localises to the vacuole. The protein resides in the cytoplasmic vesicle. In terms of biological role, not known; MLPs constitute up to 50% of the soluble latex protein. In Papaver somniferum (Opium poppy), this protein is Major latex protein 146 (MLP146).